We begin with the raw amino-acid sequence, 153 residues long: Melatonin receptor type 1A X2.0 (153 aa).

The Cytoplasmic segment spans residues 1-12 (HSSWYNRLFSNS). Residues 13–33 (GTICYVGLVWVLALGAILPNL) traverse the membrane as a helical segment. Over 34-57 (FVGSLRCDPRIFSCTFAQYVSSYY) the chain is Extracellular. The chain crosses the membrane as a helical span at residues 58 to 78 (TIAVVIFHFFLPIGVVSYCYL). The Cytoplasmic portion of the chain corresponds to 79-112 (RIWVLVLNIRHRVKPDRHLHHQTWPYNIHGFITM). A helical transmembrane segment spans residues 113 to 133 (FVVFVLFAVCWGPLNIIGLTV). Residues 134 to 145 (AIYPPLGDSIPQ) lie on the Extracellular side of the membrane. The chain crosses the membrane as a helical span at residues 146-153 (WLFVASYF).

The protein belongs to the G-protein coupled receptor 1 family.

The protein localises to the cell membrane. High affinity receptor for melatonin. The activity of this receptor is mediated by pertussis toxin sensitive G proteins that inhibits adenylate cyclase activity. This Xenopus laevis (African clawed frog) protein is Melatonin receptor type 1A X2.0.